A 442-amino-acid chain; its full sequence is Trigger factor (442 aa).

Residues 163–248 (YDRVTINYCI…IIKIEKKQEL (86 aa)) enclose the PPIase FKBP-type domain.

This sequence belongs to the FKBP-type PPIase family. Tig subfamily.

It localises to the cytoplasm. It carries out the reaction [protein]-peptidylproline (omega=180) = [protein]-peptidylproline (omega=0). In terms of biological role, involved in protein export. Acts as a chaperone by maintaining the newly synthesized protein in an open conformation. Functions as a peptidyl-prolyl cis-trans isomerase. This Buchnera aphidicola subsp. Acyrthosiphon pisum (strain 5A) protein is Trigger factor.